Here is a 101-residue protein sequence, read N- to C-terminus: A-type ATP synthase subunit F (101 aa).

The protein belongs to the V-ATPase F subunit family. Has multiple subunits, A(3), B(3), C, D, E, F, G, I and K(x); there may be a few other subunits as well.

Its subcellular location is the cell membrane. Functionally, component of the A-type ATP synthase that produces ATP from ADP in the presence of a proton gradient across the membrane. The polypeptide is A-type ATP synthase subunit F (Methanosarcina mazei (strain ATCC BAA-159 / DSM 3647 / Goe1 / Go1 / JCM 11833 / OCM 88) (Methanosarcina frisia)).